Here is a 431-residue protein sequence, read N- to C-terminus: Enolase (431 aa).

(2R)-2-phosphoglycerate is bound at residue Gln167. Glu209 serves as the catalytic Proton donor. Residues Asp246, Glu289, and Asp316 each contribute to the Mg(2+) site. (2R)-2-phosphoglycerate contacts are provided by Lys341, Arg370, Ser371, and Lys392. The Proton acceptor role is filled by Lys341.

This sequence belongs to the enolase family. As to quaternary structure, component of the RNA degradosome, a multiprotein complex involved in RNA processing and mRNA degradation. Requires Mg(2+) as cofactor.

The protein localises to the cytoplasm. The protein resides in the secreted. Its subcellular location is the cell surface. It catalyses the reaction (2R)-2-phosphoglycerate = phosphoenolpyruvate + H2O. It participates in carbohydrate degradation; glycolysis; pyruvate from D-glyceraldehyde 3-phosphate: step 4/5. Its function is as follows. Catalyzes the reversible conversion of 2-phosphoglycerate (2-PG) into phosphoenolpyruvate (PEP). It is essential for the degradation of carbohydrates via glycolysis. The sequence is that of Enolase from Marinobacter nauticus (strain ATCC 700491 / DSM 11845 / VT8) (Marinobacter aquaeolei).